The chain runs to 396 residues: Subtilisin-like protease 5 (396 aa).

Residues 1–20 form the signal peptide; the sequence is MTGFFTFLSFSLAALSVTNA. The propeptide occupies 21-116; it reads AHILSVPKGA…VEPDAIISQH (96 aa). The Inhibitor I9 domain maps to 37–113; that stretch reads YIVVMKDDTS…VAFVEPDAII (77 aa). Asn63 carries an N-linked (GlcNAc...) asparagine glycan. The Peptidase S8 domain maps to 125-396; that stretch reads PWGLSRLSNR…SRLLYNGSGR (272 aa). Catalysis depends on charge relay system residues Asp156 and His187. Residues Asn230 and Asn248 are each glycosylated (N-linked (GlcNAc...) asparagine). Ser342 functions as the Charge relay system in the catalytic mechanism. Residues 376 to 389 are compositionally biased toward polar residues; that stretch reads PTIRNPGPDTTSRL. Residues 376-396 form a disordered region; sequence PTIRNPGPDTTSRLLYNGSGR. A glycan (N-linked (GlcNAc...) asparagine) is linked at Asn392.

The protein belongs to the peptidase S8 family.

It localises to the secreted. Secreted subtilisin-like serine protease with keratinolytic activity that contributes to pathogenicity. The polypeptide is Subtilisin-like protease 5 (SUB5) (Trichophyton tonsurans (Scalp ringworm fungus)).